The sequence spans 405 residues: POC1 centriolar protein homolog A (405 aa).

7 WD repeats span residues 17 to 56 (GHRDAVTCVDFSLNTKHLASGSMDSTLMIWHMKPQSRAYR), 59 to 98 (GHKDAVTCVNFSPSGHLLASGSRDKTVRIWVPNVKGESTV), 101 to 140 (AHTATVRSVHFCSDGQSLVTASDDKTVKVWSTHRQRFLFS), 143 to 182 (QHINWVRCAKFSPDGRLIVSASDDKTVKLWDKTSRECIHS), 185 to 224 (EHGGFVTYVDFHPSGTCIAAAGMDNTVKVWDARTHRLLQH), 227 to 266 (LHSAAVNALSFHPSGNYLITASSDSTLKILDLMEGRLLYT), and 269 to 308 (GHQGPATTVAFSRTGEYFASGGSDEQVMVWKSNFDIVDYG). The interval 313-352 (RRPPPLTSSSGTLPKMDLPVPPGRDRSLESVQGEPQESIS) is disordered. Over residues 341–352 (ESVQGEPQESIS) the composition is skewed to polar residues. Positions 367–395 (QLDILTQTVSILEQRLTLTEDRLKQCLEN) form a coiled coil.

Belongs to the WD repeat POC1 family. As to quaternary structure, interacts with POC1B. As to expression, widely expressed in embryonic and adult tissues.

The protein resides in the cytoplasm. It localises to the cytoskeleton. Its subcellular location is the microtubule organizing center. It is found in the centrosome. The protein localises to the centriole. The protein resides in the cilium basal body. It localises to the spindle pole. Functionally, plays an important role in centriole assembly and/or stability and ciliogenesis. Involved in early steps of centriole duplication, as well as in the later steps of centriole length control. Acts in concert with POC1B to ensure centriole integrity and proper mitotic spindle formation. The sequence is that of POC1 centriolar protein homolog A (Poc1a) from Mus musculus (Mouse).